Here is a 352-residue protein sequence, read N- to C-terminus: Major capsid protein (352 aa).

It localises to the virion. Its function is as follows. Assembles to form a prolate capsid of about 145 nm x 44 nm. This is Major capsid protein from Escherichia coli (Escherichia coli phage phi32).